The following is a 410-amino-acid chain: Multifunctional CCA protein (410 aa).

Gly-8 and Arg-11 together coordinate ATP. CTP contacts are provided by Gly-8 and Arg-11. Residues Glu-21 and Asp-23 each contribute to the Mg(2+) site. ATP contacts are provided by Arg-91, Arg-137, and Arg-140. Arg-91, Arg-137, and Arg-140 together coordinate CTP. Residues 228–329 form the HD domain; sequence TGIHSLMTLR…VKLLEQVDAF (102 aa).

It belongs to the tRNA nucleotidyltransferase/poly(A) polymerase family. Bacterial CCA-adding enzyme type 1 subfamily. As to quaternary structure, monomer. Can also form homodimers and oligomers. It depends on Mg(2+) as a cofactor. The cofactor is Ni(2+).

The catalysed reaction is a tRNA precursor + 2 CTP + ATP = a tRNA with a 3' CCA end + 3 diphosphate. It catalyses the reaction a tRNA with a 3' CCA end + 2 CTP + ATP = a tRNA with a 3' CCACCA end + 3 diphosphate. Its function is as follows. Catalyzes the addition and repair of the essential 3'-terminal CCA sequence in tRNAs without using a nucleic acid template. Adds these three nucleotides in the order of C, C, and A to the tRNA nucleotide-73, using CTP and ATP as substrates and producing inorganic pyrophosphate. tRNA 3'-terminal CCA addition is required both for tRNA processing and repair. Also involved in tRNA surveillance by mediating tandem CCA addition to generate a CCACCA at the 3' terminus of unstable tRNAs. While stable tRNAs receive only 3'-terminal CCA, unstable tRNAs are marked with CCACCA and rapidly degraded. This is Multifunctional CCA protein from Legionella pneumophila subsp. pneumophila (strain Philadelphia 1 / ATCC 33152 / DSM 7513).